The chain runs to 144 residues: Gas vesicle protein A1 (144 aa).

Residues 72-144 (EAGPRKDPGL…APSRRKEEQE (73 aa)) are disordered. Residues 113 to 127 (KQARDDGGSERETSS) are compositionally biased toward basic and acidic residues.

Belongs to the gas vesicle GvpA family. As to quaternary structure, the gas vesicle shell is 2 nm thick and consists of a single layer of this protein. It forms helical ribs nearly perpendicular to the long axis of the vesicle.

It is found in the gas vesicle shell. Its function is as follows. Gas vesicles are hollow, gas filled proteinaceous nanostructures found in some microorganisms. During planktonic growth they allow positioning of the organism at a favorable depth for light or nutrient acquisition. GvpA forms the protein shell. It is not clear what function GVs perform in soil bacteria. The sequence is that of Gas vesicle protein A1 from Streptomyces coelicolor (strain ATCC BAA-471 / A3(2) / M145).